A 321-amino-acid polypeptide reads, in one-letter code: Epiphycan (321 aa).

An N-terminal signal peptide occupies residues 1–19 (MKALARLIVGLLILDAAVT). Thr60 carries O-linked (GalNAc...) threonine glycosylation. Ser64 is a glycosylation site (O-linked (Xyl...) (dermatan sulfate) serine). Residues 64–100 (SGNRELLTPPPQPEEAEEEEEEESTPRLIDGSSPQEP) form a disordered region. Over residues 77–86 (EEAEEEEEEE) the composition is skewed to acidic residues. Residue Ser95 is glycosylated (O-linked (GalNAc...) serine). One can recognise an LRRNT domain in the interval 105–142 (VLGPQTNEDFPTCLLCTCISTTVYCDDHELDAIPPLPK). Cys117 and Cys129 are joined by a disulfide. LRR repeat units follow at residues 143–164 (NTAY…DFAS), 167–188 (DLRR…AFRK), 191–212 (QLRE…PTTL), 237–257 (DLHH…PLPE), and 258–279 (NLRA…TFCN). Cys278 and Cys311 form a disulfide bridge. N-linked (GlcNAc...) asparagine glycosylation occurs at Asn282. An LRR 6 repeat occupies 289 to 309 (ALEDIRLDGNPINLSKTPQAY).

It belongs to the small leucine-rich proteoglycan (SLRP) family. SLRP class III subfamily. In terms of processing, a long and a short form present in approximately equimolar amounts may arise by proteolysis or cleavage by exopeptidases. The O-linked polysaccharides on Thr-60 and Ser-95 are probably the mucin type linked to GalNAc. There is one glycosaminoglycan chain, known to be dermatan sulfate, and it is probably the O-glycosylation at Ser-64. In terms of tissue distribution, preferentially expressed in the zone of flattened chondrocytes of the developing limb cartilage.

It localises to the secreted. It is found in the extracellular space. The protein resides in the extracellular matrix. Functionally, may have a role in bone formation and also in establishing the ordered structure of cartilage through matrix organization. The sequence is that of Epiphycan (EPYC) from Bos taurus (Bovine).